The following is a 507-amino-acid chain: Histidine ammonia-lyase (507 aa).

The 5-imidazolinone (Ala-Gly) cross-link spans 142–144 (ASG). A 2,3-didehydroalanine (Ser) modification is found at Ser143.

Belongs to the PAL/histidase family. Contains an active site 4-methylidene-imidazol-5-one (MIO), which is formed autocatalytically by cyclization and dehydration of residues Ala-Ser-Gly.

It localises to the cytoplasm. The enzyme catalyses L-histidine = trans-urocanate + NH4(+). The protein operates within amino-acid degradation; L-histidine degradation into L-glutamate; N-formimidoyl-L-glutamate from L-histidine: step 1/3. The sequence is that of Histidine ammonia-lyase from Symbiobacterium thermophilum (strain DSM 24528 / JCM 14929 / IAM 14863 / T).